Consider the following 246-residue polypeptide: UPF0309 protein OB3413 (246 aa).

The SIS domain occupies 33–212 (MATAVMNGNS…VLKMIEIFEE (180 aa)).

Belongs to the UPF0309 family.

This Oceanobacillus iheyensis (strain DSM 14371 / CIP 107618 / JCM 11309 / KCTC 3954 / HTE831) protein is UPF0309 protein OB3413.